The sequence spans 397 residues: Digeranylgeranylglycerophospholipid reductase 1 (397 aa).

FAD is bound by residues Ala18, Asp37, Cys48, Ala49, Gly51, Arg104, Ala128, Asp284, Gly296, and Ile297.

Belongs to the geranylgeranyl reductase family. DGGGPL reductase subfamily. FAD is required as a cofactor.

The enzyme catalyses a 2,3-bis-O-phytanyl-sn-glycerol 1-phospholipid + 8 A = a 2,3-bis-O-(geranylgeranyl)-sn-glycerol 1-phospholipid + 8 AH2. The catalysed reaction is 2,3-bis-O-(phytanyl)-sn-glycerol 1-phosphate + 8 A = 2,3-bis-O-(geranylgeranyl)-sn-glycerol 1-phosphate + 8 AH2. It catalyses the reaction CDP-2,3-bis-O-(geranylgeranyl)-sn-glycerol + 8 AH2 = CDP-2,3-bis-O-(phytanyl)-sn-glycerol + 8 A. It carries out the reaction archaetidylserine + 8 AH2 = 2,3-bis-O-phytanyl-sn-glycero-3-phospho-L-serine + 8 A. It participates in membrane lipid metabolism; glycerophospholipid metabolism. Its function is as follows. Is involved in the reduction of 2,3-digeranylgeranylglycerophospholipids (unsaturated archaeols) into 2,3-diphytanylglycerophospholipids (saturated archaeols) in the biosynthesis of archaeal membrane lipids. Catalyzes the formation of archaetidic acid (2,3-di-O-phytanyl-sn-glyceryl phosphate) from 2,3-di-O-geranylgeranylglyceryl phosphate (DGGGP) via the hydrogenation of each double bond of the isoprenoid chains. Is also probably able to reduce double bonds of geranyl groups in CDP-2,3-bis-O-(geranylgeranyl)-sn-glycerol and archaetidylserine, thus acting at various stages in the biosynthesis of archaeal membrane lipids. The protein is Digeranylgeranylglycerophospholipid reductase 1 of Methanothermobacter thermautotrophicus (strain ATCC 29096 / DSM 1053 / JCM 10044 / NBRC 100330 / Delta H) (Methanobacterium thermoautotrophicum).